Reading from the N-terminus, the 162-residue chain is Protein snakeskin (162 aa).

At Val2–Thr6 the chain is on the cytoplasmic side. Residues Val7–Tyr27 traverse the membrane as a helical segment. Topologically, residues Arg28–Glu53 are extracellular. The chain crosses the membrane as a helical span at residues Ile54–Phe74. At Ala75 to Thr88 the chain is on the cytoplasmic side. A helical transmembrane segment spans residues Ile89–Trp109. Residues Lys110–Gly128 lie on the Extracellular side of the membrane. Residues Ile129–Ala149 form a helical membrane-spanning segment. The Cytoplasmic portion of the chain corresponds to Cys150 to Gln162.

In terms of assembly, forms a complex with Tsp2A and mesh. Interacts with mesh; the interaction may be necessary for the localization of both proteins to the cell apicolateral region.

Its subcellular location is the apicolateral cell membrane. The protein localises to the cell junction. It localises to the septate junction. Required for assembly of smooth septate junctions (sSJs), together with mesh and Tsp2A. May be important for barrier function of the midgut epithelium. This Drosophila melanogaster (Fruit fly) protein is Protein snakeskin.